Consider the following 342-residue polypeptide: Methionine import ATP-binding protein MetN 2 (342 aa).

Residues 2–241 (ISIEGLSKVF…PKQLVTRKFV (240 aa)) form the ABC transporter domain. 38–45 (GYSGAGKS) lines the ATP pocket.

Belongs to the ABC transporter superfamily. Methionine importer (TC 3.A.1.24) family. As to quaternary structure, the complex is composed of two ATP-binding proteins (MetN), two transmembrane proteins (MetI) and a solute-binding protein (MetQ).

The protein resides in the cell membrane. It carries out the reaction L-methionine(out) + ATP + H2O = L-methionine(in) + ADP + phosphate + H(+). It catalyses the reaction D-methionine(out) + ATP + H2O = D-methionine(in) + ADP + phosphate + H(+). Its function is as follows. Part of the ABC transporter complex MetNIQ involved in methionine import. Responsible for energy coupling to the transport system. The chain is Methionine import ATP-binding protein MetN 2 from Oceanobacillus iheyensis (strain DSM 14371 / CIP 107618 / JCM 11309 / KCTC 3954 / HTE831).